Reading from the N-terminus, the 83-residue chain is MAFGAGGGGGRRPFFRRRKTCPFSGPNAPKIDYKDVKLLSRYVSERGKIVPSRITAVSAKKQRELAQAIKRARFLGFLPYVIR.

It belongs to the bacterial ribosomal protein bS18 family. Part of the 30S ribosomal subunit. Forms a tight heterodimer with protein bS6.

Functionally, binds as a heterodimer with protein bS6 to the central domain of the 16S rRNA, where it helps stabilize the platform of the 30S subunit. This Methylobacterium sp. (strain 4-46) protein is Small ribosomal subunit protein bS18.